An 859-amino-acid chain; its full sequence is Mismatch repair endonuclease PMS2 (859 aa).

ATP-binding residues include N45, D70, E109, A110, and L111. Disordered regions lie at residues E391–K413, L427–L455, and R469–D555. Basic and acidic residues-rich tracts occupy residues L427–E439 and C485–S495. The segment covering E512–S525 has biased composition (polar residues). A Nuclear localization signal motif is present at residues K574–K577. The interval T578–T597 is disordered. The segment covering S583 to T597 has biased composition (polar residues).

It belongs to the DNA mismatch repair MutL/HexB family. In terms of assembly, heterodimer of PMS2 and MLH1 (MutL alpha); this interaction is required for the stability of both partners. Forms a ternary complex with MutS alpha (MSH2-MSH6) or MutS beta (MSH2-MSH3). Part of the BRCA1-associated genome surveillance complex (BASC), which contains BRCA1, MSH2, MSH6, MLH1, ATM, BLM, PMS2 and the RAD50-MRE11-NBS1 protein complex. This association could be a dynamic process changing throughout the cell cycle and within subnuclear domains. Interacts with MTMR15/FAN1.

Its subcellular location is the nucleus. The enzyme catalyses ATP + H2O = ADP + phosphate + H(+). Component of the post-replicative DNA mismatch repair system (MMR). Heterodimerizes with MLH1 to form MutL alpha. DNA repair is initiated by MutS alpha (MSH2-MSH6) or MutS beta (MSH2-MSH3) binding to a dsDNA mismatch, then MutL alpha is recruited to the heteroduplex. Assembly of the MutL-MutS-heteroduplex ternary complex in presence of RFC and PCNA is sufficient to activate endonuclease activity of PMS2. It introduces single-strand breaks near the mismatch and thus generates new entry points for the exonuclease EXO1 to degrade the strand containing the mismatch. DNA methylation would prevent cleavage and therefore assure that only the newly mutated DNA strand is going to be corrected. MutL alpha (MLH1-PMS2) interacts physically with the clamp loader subunits of DNA polymerase III, suggesting that it may play a role to recruit the DNA polymerase III to the site of the MMR. Also implicated in DNA damage signaling, a process which induces cell cycle arrest and can lead to apoptosis in case of major DNA damages. Possesses an ATPase activity, but in the absence of gross structural changes, ATP hydrolysis may not be necessary for proficient mismatch repair. The protein is Mismatch repair endonuclease PMS2 of Mus musculus (Mouse).